We begin with the raw amino-acid sequence, 163 residues long: Ribosome maturation factor RimP (163 aa).

Residues 66-85 are disordered; it reads ALDRDDPVPGPPYELEVSSP.

Belongs to the RimP family.

It is found in the cytoplasm. Its function is as follows. Required for maturation of 30S ribosomal subunits. This is Ribosome maturation factor RimP from Kocuria rhizophila (strain ATCC 9341 / DSM 348 / NBRC 103217 / DC2201).